A 629-amino-acid chain; its full sequence is Bifunctional protein ArgHA (629 aa).

Residues 1 to 499 (MALWGGRFSQ…NLPRSRSDLV (499 aa)) form an argininosuccinate lyase region. Residues 464–598 (ISIRAARLTD…EKVLKDCDMC (135 aa)) form the N-acetyltransferase domain. Residues 500 to 629 (KAVGTFAVTE…INLKAEKLAS (130 aa)) are amino-acid acetyltransferase.

This sequence in the N-terminal section; belongs to the lyase 1 family. Argininosuccinate lyase subfamily. It in the C-terminal section; belongs to the acetyltransferase family. ArgA subfamily.

It is found in the cytoplasm. It carries out the reaction 2-(N(omega)-L-arginino)succinate = fumarate + L-arginine. The catalysed reaction is L-glutamate + acetyl-CoA = N-acetyl-L-glutamate + CoA + H(+). Its pathway is amino-acid biosynthesis; L-arginine biosynthesis; N(2)-acetyl-L-ornithine from L-glutamate: step 1/4. The protein operates within amino-acid biosynthesis; L-arginine biosynthesis; L-arginine from L-ornithine and carbamoyl phosphate: step 3/3. The protein is Bifunctional protein ArgHA (argHA) of Moritella abyssi.